A 315-amino-acid polypeptide reads, in one-letter code: Protein sprouty homolog 2 (315 aa).

Polar residues predominate over residues 1-15 (MEARAQSGNGSQPLL). Residues 1–140 (MEARAQSGNG…SEQRLLGSSF (140 aa)) form a disordered region. Residues 20–32 (DGGRPRGEPDPRD) show a composition bias toward basic and acidic residues. A compositionally biased stretch (low complexity) spans 108 to 140 (SRSISTVSSGSRSSTRTSTSSSSSEQRLLGSSF). The interval 118-315 (SRSSTRTSTS…VPRRNFEKPT (198 aa)) is required for interaction with CAV1. Positions 177–291 (RCEDCGKCKC…CYDRVNRPGC (115 aa)) constitute an SPR domain. The tract at residues 178 to 315 (CEDCGKCKCK…VPRRNFEKPT (138 aa)) is required for interaction with TESK1.

Belongs to the sprouty family. In terms of assembly, forms heterodimers with SPRY1. Forms a tripartite complex containing GAB1, METTL13 and SPRY2. Within the complex interacts with METTL13. Interacts with RAF1. Interacts (via C-terminus) with TESK1 (via C-terminus); the interaction disrupts SPRY2 interaction with GRB2, potentially via disruption of SPRY2 serine dephosphorylation. Interacts with PPP2R1A/PP2A-A and PPP2CA/PP2A-C; the interaction with PPP2CA/PP2A-C is inhibited by interaction with TESK1, possibly by vesicular sequestration of SPRY2. Inhibition of the interaction with the serine/threonine-protein phosphatase 2A (PP2A) holoenzyme results in loss of PP2A-mediated dephosphorylation, resulting in the loss of SPRY2 interaction with GRB2. Interacts with GRB2. Interacts with CBL/C-CBL; the interaction inhibits CBL-mediated ubiquitination of EGFR. Interacts (via C-terminus) with CAV1 (via C-terminus). In terms of processing, cleaved at Pro-144 by the prolyl endopeptidase FAP (seprase) activity (in vitro).

The protein resides in the cytoplasm. The protein localises to the cytoskeleton. It is found in the cell projection. It localises to the ruffle membrane. Functionally, antagonist of fibroblast growth factor (FGF) pathways via inhibition of FGF-mediated phosphorylation of ERK1/2. Thereby acts as an antagonist of FGF-induced retinal lens fiber differentiation, may inhibit limb bud outgrowth and may negatively modulate respiratory organogenesis. Inhibits TGFB-induced epithelial-to-mesenchymal transition in retinal lens epithelial cells. Inhibits CBL/C-CBL-mediated EGFR ubiquitination. The sequence is that of Protein sprouty homolog 2 (SPRY2) from Pongo abelii (Sumatran orangutan).